Here is a 331-residue protein sequence, read N- to C-terminus: Centriolar satellite-associated tubulin polyglutamylase complex regulator 1 (331 aa).

The segment at 1-111 (MLSPERLALP…HCLLQLLCPD (111 aa)) is required for interaction with PCM1. The required for interaction with TPGS1, LRRC49, and TTLL1 stretch occupies residues 1–225 (MLSPERLALP…SCPPPALVKE (225 aa)). Positions 112–331 (FPLELTQKAA…STEETDESET (220 aa)) are required for interaction with TPGS2. The interval 288–331 (SPEASCLPSRTPPRVGSPWRPLHHSRKVDGESDGSTEETDESET) is disordered. Residues 318–331 (ESDGSTEETDESET) are compositionally biased toward acidic residues. Position 319 is a phosphoserine (serine 319).

The protein belongs to the CSTPP1 family. In terms of assembly, interacts with PCM1. Interacts with TTLL1, TPGS1, TPGS2 and LRRC49; the interactions link CSTPP1 to the complex TPGC. Binds to alpha-tubulin.

It localises to the cytoplasm. It is found in the cytoskeleton. The protein resides in the microtubule organizing center. Its subcellular location is the centrosome. The protein localises to the centriolar satellite. Regulator of the tubulin polyglutamylase complex (TPGC) that controls cytoskeletal organization, nuclear shape, and cilium disassembly by balancing microtubule and actin assembly. Regulates the assembly and stability of the TPGC and thereby modulates polyglutamylation of the microtubule, which antagonizes MAP4 binding. The sequence is that of Centriolar satellite-associated tubulin polyglutamylase complex regulator 1 from Homo sapiens (Human).